The following is a 492-amino-acid chain: Aspartyl/glutamyl-tRNA(Asn/Gln) amidotransferase subunit B (492 aa).

This sequence belongs to the GatB/GatE family. GatB subfamily. In terms of assembly, heterotrimer of A, B and C subunits.

It catalyses the reaction L-glutamyl-tRNA(Gln) + L-glutamine + ATP + H2O = L-glutaminyl-tRNA(Gln) + L-glutamate + ADP + phosphate + H(+). It carries out the reaction L-aspartyl-tRNA(Asn) + L-glutamine + ATP + H2O = L-asparaginyl-tRNA(Asn) + L-glutamate + ADP + phosphate + 2 H(+). Functionally, allows the formation of correctly charged Asn-tRNA(Asn) or Gln-tRNA(Gln) through the transamidation of misacylated Asp-tRNA(Asn) or Glu-tRNA(Gln) in organisms which lack either or both of asparaginyl-tRNA or glutaminyl-tRNA synthetases. The reaction takes place in the presence of glutamine and ATP through an activated phospho-Asp-tRNA(Asn) or phospho-Glu-tRNA(Gln). The protein is Aspartyl/glutamyl-tRNA(Asn/Gln) amidotransferase subunit B of Pelagibacter ubique (strain HTCC1062).